Reading from the N-terminus, the 514-residue chain is MQKAGCRLEHPSATKFRNHVMEGDWDKAENDLNELKPLVHSPHAIVVRGALEISQTLLGIIVRMKFLLLQQKYLEYLEDGKVLEALQVLRCELTPLKYNTERIHVLSGYLMCSHAEDLRAKAEWEGKGAASRSKLLDKLQTYLPPSVMLPPRRLQTLLRQAVELQRDRCLYHNTKLDNNLDSVSLLIDHVCSRRQFPCYTQQILTEHCNEVWFCKFSNDGTKLATGSKDTTVIVWQVDADTHLLKLLKTLEGHAYGVSYIAWSPDDSYLVACGPDDCSELWLWNVQTGELRTKMSQSHEDSLTSVAWNPDGKRFVTGGQRGQFYQCDLDGNLLDSWEGVRVQCLWCLSDGKTVLASDTHQRIRGYNFEDLTDRNIVQEDHPIMSFTISKNGRLALLNVATQGVHLWDLQDRVLVRKYQGVTQGFYTIHSCFGGHNEDFIASGSEDHKVYIWHKRSELPIAELTGHTRTVNCVSWNPQIPSMMASASDDGTVRIWGPAPFIDHQNIEEECSSMDS.

Residues 9–84 enclose the CTLH domain; the sequence is EHPSATKFRN…EYLEDGKVLE (76 aa). 6 WD repeats span residues 206–245, 252–291, 297–337, 377–416, 419–461, and 464–504; these read EHCN…HLLK, GHAY…GELR, SHED…DSWE, QEDH…LVRK, GVTQ…PIAE, and GHTR…DHQN.

As to quaternary structure, forms homooligomers. Identified in the CTLH complex that contains GID4, RANBP9 and/or RANBP10, MKLN1, MAEA, RMND5A (or alternatively its paralog RMND5B), GID8, ARMC8, WDR26 and YPEL5. Within this complex, MAEA, RMND5A (or alternatively its paralog RMND5B), GID8, WDR26, and RANBP9 and/or RANBP10 form the catalytic core, while GID4, MKLN1, ARMC8 and YPEL5 have ancillary roles. Interacts with DDB1-CUL4A/B E3 ligase complexes. Forms a complex composed of at least WDR26, a G-beta:gamma unit, and PLCB2. Interacts with AXIN1.

It is found in the cytoplasm. The protein localises to the nucleus. Its subcellular location is the mitochondrion. Functionally, G-beta-like protein involved in cell signal transduction. Acts as a negative regulator in MAPK signaling pathway. Functions as a scaffolding protein to promote G beta:gamma-mediated PLCB2 plasma membrane translocation and subsequent activation in leukocytes. Core component of the CTLH E3 ubiquitin-protein ligase complex that selectively accepts ubiquitin from UBE2H and mediates ubiquitination and subsequent proteasomal degradation of the transcription factor HBP1. Acts as a negative regulator of the canonical Wnt signaling pathway through preventing ubiquitination of beta-catenin CTNNB1 by the beta-catenin destruction complex, thus negatively regulating CTNNB1 degradation. Protects cells from oxidative stress-induced apoptosis via the down-regulation of AP-1 transcriptional activity as well as by inhibiting cytochrome c release from mitochondria. Also protects cells by promoting hypoxia-mediated autophagy and mitophagy. In Rattus norvegicus (Rat), this protein is WD repeat-containing protein 26 (Wdr26).